A 159-amino-acid chain; its full sequence is 2-C-methyl-D-erythritol 2,4-cyclodiphosphate synthase (159 aa).

The a divalent metal cation site is built by Asp8 and His10. 4-CDP-2-C-methyl-D-erythritol 2-phosphate is bound by residues 8–10 (DVH) and 34–35 (HS). His42 serves as a coordination point for a divalent metal cation. 4-CDP-2-C-methyl-D-erythritol 2-phosphate contacts are provided by residues 56 to 58 (DIG), 61 to 65 (FPDTD), 100 to 106 (AQAPKMA), 132 to 135 (TTTE), Phe139, and Arg142.

This sequence belongs to the IspF family. Homotrimer. A divalent metal cation is required as a cofactor.

It carries out the reaction 4-CDP-2-C-methyl-D-erythritol 2-phosphate = 2-C-methyl-D-erythritol 2,4-cyclic diphosphate + CMP. It functions in the pathway isoprenoid biosynthesis; isopentenyl diphosphate biosynthesis via DXP pathway; isopentenyl diphosphate from 1-deoxy-D-xylulose 5-phosphate: step 4/6. Its function is as follows. Involved in the biosynthesis of isopentenyl diphosphate (IPP) and dimethylallyl diphosphate (DMAPP), two major building blocks of isoprenoid compounds. Catalyzes the conversion of 4-diphosphocytidyl-2-C-methyl-D-erythritol 2-phosphate (CDP-ME2P) to 2-C-methyl-D-erythritol 2,4-cyclodiphosphate (ME-CPP) with a corresponding release of cytidine 5-monophosphate (CMP). This is 2-C-methyl-D-erythritol 2,4-cyclodiphosphate synthase from Cronobacter sakazakii (strain ATCC BAA-894) (Enterobacter sakazakii).